A 431-amino-acid chain; its full sequence is Glutamyl-tRNA(Gln) amidotransferase subunit A (431 aa).

Residues Lys37 and Ser112 each act as charge relay system in the active site. The active-site Acyl-ester intermediate is the Ser136.

The protein belongs to the amidase family. GatA subfamily. Heterotrimer of A, B and C subunits.

It catalyses the reaction L-glutamyl-tRNA(Gln) + L-glutamine + ATP + H2O = L-glutaminyl-tRNA(Gln) + L-glutamate + ADP + phosphate + H(+). Allows the formation of correctly charged Gln-tRNA(Gln) through the transamidation of misacylated Glu-tRNA(Gln) in organisms which lack glutaminyl-tRNA synthetase. The reaction takes place in the presence of glutamine and ATP through an activated gamma-phospho-Glu-tRNA(Gln). This Methanospirillum hungatei JF-1 (strain ATCC 27890 / DSM 864 / NBRC 100397 / JF-1) protein is Glutamyl-tRNA(Gln) amidotransferase subunit A.